The chain runs to 236 residues: tRNA1(Val) (adenine(37)-N6)-methyltransferase (236 aa).

This sequence belongs to the methyltransferase superfamily. tRNA (adenine-N(6)-)-methyltransferase family.

The protein resides in the cytoplasm. The enzyme catalyses adenosine(37) in tRNA1(Val) + S-adenosyl-L-methionine = N(6)-methyladenosine(37) in tRNA1(Val) + S-adenosyl-L-homocysteine + H(+). In terms of biological role, specifically methylates the adenine in position 37 of tRNA(1)(Val) (anticodon cmo5UAC). The chain is tRNA1(Val) (adenine(37)-N6)-methyltransferase from Aeromonas hydrophila subsp. hydrophila (strain ATCC 7966 / DSM 30187 / BCRC 13018 / CCUG 14551 / JCM 1027 / KCTC 2358 / NCIMB 9240 / NCTC 8049).